The sequence spans 369 residues: 2-aminoethylphosphonate--pyruvate transaminase (369 aa).

Lys-193 is modified (N6-(pyridoxal phosphate)lysine).

Belongs to the class-V pyridoxal-phosphate-dependent aminotransferase family. PhnW subfamily. Homodimer. It depends on pyridoxal 5'-phosphate as a cofactor.

The catalysed reaction is (2-aminoethyl)phosphonate + pyruvate = phosphonoacetaldehyde + L-alanine. Involved in phosphonate degradation. The chain is 2-aminoethylphosphonate--pyruvate transaminase from Pseudomonas fluorescens (strain Pf0-1).